The primary structure comprises 355 residues: Methylthioribose-1-phosphate isomerase (355 aa).

Residues 50–52, arginine 93, and glutamine 198 each bind substrate; that span reads RGA. The active-site Proton donor is the aspartate 239. Position 249 to 250 (249 to 250) interacts with substrate; that stretch reads NK.

The protein belongs to the eIF-2B alpha/beta/delta subunits family. MtnA subfamily. In terms of assembly, homodimer.

The enzyme catalyses 5-(methylsulfanyl)-alpha-D-ribose 1-phosphate = 5-(methylsulfanyl)-D-ribulose 1-phosphate. The protein operates within amino-acid biosynthesis; L-methionine biosynthesis via salvage pathway; L-methionine from S-methyl-5-thio-alpha-D-ribose 1-phosphate: step 1/6. Functionally, catalyzes the interconversion of methylthioribose-1-phosphate (MTR-1-P) into methylthioribulose-1-phosphate (MTRu-1-P). This chain is Methylthioribose-1-phosphate isomerase, found in Geobacillus kaustophilus (strain HTA426).